The following is a 243-amino-acid chain: Precursor of CEP9 (243 aa).

The first 26 residues, 1–26, serve as a signal peptide directing secretion; that stretch reads MKLLSITLTSIVISMVFYQTPITTEA. The propeptide occupies 28 to 44; it reads SLRKTNDQDHFKAGFTD. Disordered stretches follow at residues 42 to 63, 91 to 173, and 189 to 243; these read FTDD…KKGN, KTGS…VKGF, and NGQD…EPKA. Proline 48 carries the post-translational modification Hydroxyproline; partial. Residue proline 51 is modified to Hydroxyproline. At proline 55 the chain carries Hydroxyproline; partial. The propeptide occupies 60-96; sequence KKGNVNVEGFQDDFKPTEGRKLLKTNVQDHFKTGSTD. A hydroxyproline mark is found at proline 100, proline 103, and proline 107. A propeptide spanning residues 112-148 is cleaved from the precursor; sequence KKGNVNVESSEDDFKHKEGRKLQQTNGQNHFKTGSTD. A compositionally biased stretch (polar residues) spans 133–147; that stretch reads LQQTNGQNHFKTGST. Hydroxyproline occurs at positions 152, 155, and 159. A propeptide spanning residues 164–200 is cleaved from the precursor; that stretch reads KKGHANVKGFKDDFAPTEEIRLQKMNGQDHFKTGSTD. A hydroxyproline mark is found at proline 204, proline 207, and proline 211. A propeptide spanning residues 216–219 is cleaved from the precursor; sequence KKGD. Proline 223, proline 226, and proline 230 each carry hydroxyproline. Positions 235-243 are excised as a propeptide; the sequence is AVKNDEPKA.

It belongs to the C-terminally encoded plant signaling peptide (CEP) family. Interacts with CEP receptors (e.g. CEPR1 and CEPR2). In terms of processing, hydroxylated peptide is more active than non-hydroxylated peptide. The mature small signaling peptide is generated by proteolytic processing of the longer precursor. Expressed in lateral root primordia and in lateral roots excluding the meristem region. Also present in the aerial tissues, such as leaf petioles and the shoot apex region.

It localises to the secreted. The protein localises to the extracellular space. Its subcellular location is the apoplast. Its function is as follows. Extracellular signaling peptide that represses primary root growth rate and significantly inhibits lateral root formation. Modulates leaf morphology. Regulates systemic nitrogen (N)-demand signaling. Mediates up-regulation of genes involved in N uptake and assimilation pathways. The sequence is that of Precursor of CEP9 from Arabidopsis thaliana (Mouse-ear cress).